The sequence spans 152 residues: MRSLLLTVLLNLVVLLATTGAVSSNLNTAVNYASTSKIRFLSTEYNADEKRSLRGDYNNEVTKEPNTSDEERAFSISKSAEYVKMVLYGFKLGFSPRTQSKTVLRYEDKLFTALYKSGETPRSLRTKHLDKASASVFFNRFKKWYDKNVGPS.

Residues 1 to 24 form the signal peptide; sequence MRSLLLTVLLNLVVLLATTGAVSS. The RxLR-dEER signature appears at 51-72; that stretch reads RSLRGDYNNEVTKEPNTSDEER. Residues 54–56 carry the RGD RLK-binding motif motif; that stretch reads RGD. Asn66 is a glycosylation site (N-linked (GlcNAc...) asparagine). Positions 99-152 are w motif; sequence QSKTVLRYEDKLFTALYKSGETPRSLRTKHLDKASASVFFNRFKKWYDKNVGPS.

The protein belongs to the RxLR effector family. As to quaternary structure, interacts with host defense protein RGA2/Rpi-blb1. Interacts with host legume-type lectin receptor kinase LECRK19.

The protein localises to the secreted. Its subcellular location is the host nucleus. The protein resides in the host nucleolus. It is found in the host cell membrane. In terms of biological role, secreted effector that acts as an elicitor of hypersensitive response (HR) specifically on plants carrying defense protein RGA2/Rpi-blb1. Enhances P.infestans colonization of plant hosts Nicotiana benthamiana and potato Solanum bulbocastanum leaves. Associates with host legume-type lectin receptor kinases and disrupts attachments between the host plasma membrane and cell wall. The sequence is that of RxLR effector protein Avrblb1 from Phytophthora infestans (strain T30-4) (Potato late blight agent).